Here is a 184-residue protein sequence, read N- to C-terminus: Probable gluconokinase (184 aa).

11-18 (GVSGSGKS) lines the ATP pocket.

Belongs to the gluconokinase GntK/GntV family.

It catalyses the reaction D-gluconate + ATP = 6-phospho-D-gluconate + ADP + H(+). The protein operates within carbohydrate acid metabolism; D-gluconate degradation. The chain is Probable gluconokinase (Idnk) from Mus musculus (Mouse).